A 170-amino-acid chain; its full sequence is Peptide deformylase (170 aa).

C91 and H133 together coordinate Fe cation. The active site involves E134. Residue H137 participates in Fe cation binding.

The protein belongs to the polypeptide deformylase family. It depends on Fe(2+) as a cofactor.

The catalysed reaction is N-terminal N-formyl-L-methionyl-[peptide] + H2O = N-terminal L-methionyl-[peptide] + formate. Removes the formyl group from the N-terminal Met of newly synthesized proteins. Requires at least a dipeptide for an efficient rate of reaction. N-terminal L-methionine is a prerequisite for activity but the enzyme has broad specificity at other positions. The chain is Peptide deformylase from Histophilus somni (strain 129Pt) (Haemophilus somnus).